Reading from the N-terminus, the 355-residue chain is Protein ATP1B4 (355 aa).

Over 1–108 the chain is Nuclear; the sequence is MRRQLRSRRA…SLARTGQSWS (108 aa). The tract at residues 33-77 is disordered; that stretch reads ADEEEEAEEEARVMVVPDLEEEEEEEEEKEEEEKEEEDSHSQETD. Residues 50 to 68 are compositionally biased toward acidic residues; sequence DLEEEEEEEEEKEEEEKEE. A helical; Signal-anchor for type II membrane protein transmembrane segment spans residues 109–129; that stretch reads LILVIYFFFYASLAAVITLCM. Over 130–355 the chain is Perinuclear space; that stretch reads YTLFLTISPY…RVIFTLNIET (226 aa).

The protein belongs to the X(+)/potassium ATPases subunit beta family. As to quaternary structure, associates with a SMAD7-transcriptional complex. Interacts with SNW1 and TOR1AIP1. Does not associate with known Na,K-ATPase alpha-subunits.

The protein resides in the nucleus inner membrane. May act as a transcriptional coregulator during muscle development through its interaction with SNW1. Has lost its ancestral function as a Na,K-ATPase beta-subunit. This Bos taurus (Bovine) protein is Protein ATP1B4 (ATP1B4).